Here is a 38-residue protein sequence, read N- to C-terminus: Potassium channel toxin alpha-KTx 3.8 (38 aa).

Cystine bridges form between cysteine 8-cysteine 28, cysteine 14-cysteine 33, and cysteine 18-cysteine 35. The tract at residues 26–33 is interaction with Ca(2+)-activated K(+) channels; it reads GKCMNGKC.

In terms of tissue distribution, expressed by the venom gland.

It localises to the secreted. Functionally, potassium channel inhibitor. The chain is Potassium channel toxin alpha-KTx 3.8 from Hottentotta tamulus sindicus (Scorpion).